Here is a 311-residue protein sequence, read N- to C-terminus: Ribonuclease Z (311 aa).

Zn(2+) is bound by residues His-61, His-63, Asp-65, His-66, His-137, Asp-207, and His-263. Asp-65 functions as the Proton acceptor in the catalytic mechanism.

The protein belongs to the RNase Z family. Homodimer. The cofactor is Zn(2+).

It catalyses the reaction Endonucleolytic cleavage of RNA, removing extra 3' nucleotides from tRNA precursor, generating 3' termini of tRNAs. A 3'-hydroxy group is left at the tRNA terminus and a 5'-phosphoryl group is left at the trailer molecule.. Zinc phosphodiesterase, which displays some tRNA 3'-processing endonuclease activity. Probably involved in tRNA maturation, by removing a 3'-trailer from precursor tRNA. This chain is Ribonuclease Z, found in Thermococcus onnurineus (strain NA1).